The following is a 384-amino-acid chain: Endoglucanase (384 aa).

The N-terminal stretch at 1–25 is a signal peptide; it reads MTRRRLLHAGTLAGVAALLPAAALA. Glu-63 functions as the Proton donor in the catalytic mechanism. Asp-124 (nucleophile) is an active-site residue.

It belongs to the glycosyl hydrolase 8 (cellulase D) family.

It is found in the secreted. It carries out the reaction Endohydrolysis of (1-&gt;4)-beta-D-glucosidic linkages in cellulose, lichenin and cereal beta-D-glucans.. The protein operates within glycan metabolism; bacterial cellulose biosynthesis. Hydrolyzes carboxymethylcellulose. The protein is Endoglucanase (bcsZ) of Xanthomonas axonopodis pv. citri (strain 306).